The following is a 60-amino-acid chain: MACPKKKTSNAKRDQRRAHWRKQAAREAQKALSLGKSVLSGRSNSFVYPTKEEEEGEDEE.

Positions 1-23 (MACPKKKTSNAKRDQRRAHWRKQ) are enriched in basic residues. The interval 1–60 (MACPKKKTSNAKRDQRRAHWRKQAAREAQKALSLGKSVLSGRSNSFVYPTKEEEEGEDEE) is disordered.

This sequence belongs to the bacterial ribosomal protein bL32 family.

The protein is Large ribosomal subunit protein bL32 of Microcystis aeruginosa (strain NIES-843 / IAM M-2473).